The chain runs to 446 residues: Phosphoglucosamine mutase (446 aa).

The Phosphoserine intermediate role is filled by S99. 4 residues coordinate Mg(2+): S99, D242, D244, and D246. S99 is subject to Phosphoserine.

The protein belongs to the phosphohexose mutase family. Requires Mg(2+) as cofactor. Activated by phosphorylation.

It carries out the reaction alpha-D-glucosamine 1-phosphate = D-glucosamine 6-phosphate. In terms of biological role, catalyzes the conversion of glucosamine-6-phosphate to glucosamine-1-phosphate. This is Phosphoglucosamine mutase from Wolinella succinogenes (strain ATCC 29543 / DSM 1740 / CCUG 13145 / JCM 31913 / LMG 7466 / NCTC 11488 / FDC 602W) (Vibrio succinogenes).